Reading from the N-terminus, the 140-residue chain is N14 matrix protein (140 aa).

Positions 1–25 (MACTLRLTIAALVLLGICHLSRPVA) are cleaved as a signal peptide.

It belongs to the N16 matrix protein family. Heterooligomer; disulfide-linked. Pif97, Pif80, N16 and other proteins form a complex. In terms of tissue distribution, component of conchiolin, the organic matrix of nacre. Only expressed in the dorsal region of the mantle.

It is found in the secreted. The protein resides in the extracellular space. It localises to the extracellular matrix. Its function is as follows. May be specifically involved in the formation of the nacreous layer. The protein is N14 matrix protein of Pinctada maxima (Silver-lipped pearl oyster).